A 301-amino-acid polypeptide reads, in one-letter code: MHRSISIRILITNLMIVILGLVGLTGNAIVFWLLLFRLRRNAFSIYILNLALADFLFLLCHIIASTEHILTFSSPNSIFINCLYTFRVLLYIAGLNMLSAISIERCLSVMCPIWYRCHRPEHTSTVMCAMIWVLSLLLCILYRYFCGFLDTKYEDDYGCLAMNFLTTAYLMFLFVVLCVSSLALLARLFCGAGRMKLTRLYVTITLTLLVFLLCGLPCGFYWFLLSKIKNVFSVFEFSLYLTSVVLTAINSCANPIIYFFVGSFRHRLKHQTLKMVLQSALQDTPETPENMVEMSRNKAEL.

The Extracellular portion of the chain corresponds to 1–15; that stretch reads MHRSISIRILITNLM. A helical transmembrane segment spans residues 16 to 36; sequence IVILGLVGLTGNAIVFWLLLF. At 37–42 the chain is on the cytoplasmic side; that stretch reads RLRRNA. Residues 43–63 traverse the membrane as a helical segment; the sequence is FSIYILNLALADFLFLLCHII. At 64 to 77 the chain is on the extracellular side; that stretch reads ASTEHILTFSSPNS. Residues 78-98 form a helical membrane-spanning segment; that stretch reads IFINCLYTFRVLLYIAGLNML. Residues 99–128 are Cytoplasmic-facing; the sequence is SAISIERCLSVMCPIWYRCHRPEHTSTVMC. Residues 129-149 form a helical membrane-spanning segment; that stretch reads AMIWVLSLLLCILYRYFCGFL. The Extracellular portion of the chain corresponds to 150–163; it reads DTKYEDDYGCLAMN. A helical transmembrane segment spans residues 164-184; it reads FLTTAYLMFLFVVLCVSSLAL. Residues 185-203 are Cytoplasmic-facing; sequence LARLFCGAGRMKLTRLYVT. A helical transmembrane segment spans residues 204–224; the sequence is ITLTLLVFLLCGLPCGFYWFL. Over 225–240 the chain is Extracellular; that stretch reads LSKIKNVFSVFEFSLY. A helical transmembrane segment spans residues 241–261; it reads LTSVVLTAINSCANPIIYFFV. At 262–301 the chain is on the cytoplasmic side; sequence GSFRHRLKHQTLKMVLQSALQDTPETPENMVEMSRNKAEL.

Belongs to the G-protein coupled receptor 1 family. Mas subfamily. Expressed in a subset of sensory neurons that includes nociceptors. Expressed in the subclass of non-peptidergic sensory neurons that are IB4(+) and VR1(-).

It is found in the cell membrane. Orphan receptor. May be a receptor for RFamide-family neuropeptides such as NPFF and NPAF, which are analgesic in vivo. May regulate nociceptor function and/or development, including the sensation or modulation of pain. The chain is Mas-related G-protein coupled receptor member A6 (Mrgpra6) from Mus musculus (Mouse).